Here is a 620-residue protein sequence, read N- to C-terminus: Probable serine/threonine-protein kinase RTK1 (620 aa).

Disordered regions lie at residues 1-20 (MVKETPLHSSSSTSLSSLFR), 29-130 (AKIF…PVRT), 153-186 (KDAFHHPHPVRSTAHSNISTVSSAKSDTPSSNLS), 210-237 (QASTPGSVELQHNSSSGSDDTSSRKKKS), and 252-271 (HDNHHHHHHHNRGSTPTKPK). Residues 7 to 18 (LHSSSSTSLSSL) are compositionally biased toward low complexity. The segment covering 56–76 (KNTDSDQEDQIKYNKPNDRRS) has biased composition (basic and acidic residues). Position 58 is a phosphothreonine (Thr58). Ser60 bears the Phosphoserine mark. Composition is skewed to polar residues over residues 95-107 (VASSTLTGISPTS), 165-186 (TAHSNISTVSSAKSDTPSSNLS), and 210-222 (QASTPGSVELQHN). At Ser216 the chain carries Phosphoserine. Positions 254-263 (NHHHHHHHNR) are enriched in basic residues. The Protein kinase domain occupies 302–575 (GIPGRKLGEG…MNDVVKDDWL (274 aa)). Residues 308-316 (LGEGASGSV) and Lys330 contribute to the ATP site. A Glycyl lysine isopeptide (Lys-Gly) (interchain with G-Cter in ubiquitin) cross-link involves residue Lys334. The active-site Proton acceptor is Asp430.

The protein belongs to the protein kinase superfamily. Ser/Thr protein kinase family. In terms of assembly, interacts with ribosome biogenesis factors ARC1, CKA2 and GUS1.

The catalysed reaction is L-seryl-[protein] + ATP = O-phospho-L-seryl-[protein] + ADP + H(+). It carries out the reaction L-threonyl-[protein] + ATP = O-phospho-L-threonyl-[protein] + ADP + H(+). Its function is as follows. Probable serine/threonine-protein kinase that may be involved in ribosome biogenesis. The polypeptide is Probable serine/threonine-protein kinase RTK1 (RTK1) (Saccharomyces cerevisiae (strain ATCC 204508 / S288c) (Baker's yeast)).